The chain runs to 78 residues: Acyl carrier protein (78 aa).

The Carrier domain maps to 2-77 (STIEERVKKI…EAIDYINAHA (76 aa)). Residue serine 37 is modified to O-(pantetheine 4'-phosphoryl)serine.

Belongs to the acyl carrier protein (ACP) family. 4'-phosphopantetheine is transferred from CoA to a specific serine of apo-ACP by AcpS. This modification is essential for activity because fatty acids are bound in thioester linkage to the sulfhydryl of the prosthetic group.

It localises to the cytoplasm. It functions in the pathway lipid metabolism; fatty acid biosynthesis. Its function is as follows. Carrier of the growing fatty acid chain in fatty acid biosynthesis. This is Acyl carrier protein from Stutzerimonas stutzeri (strain A1501) (Pseudomonas stutzeri).